The chain runs to 251 residues: Maleate isomerase (251 aa).

Residues Asn14, 76-78 (CLV), Tyr133, and Asn163 contribute to the substrate site. Cys76 serves as the catalytic Nucleophile. Position 76 is an S-(2-succinyl)cysteine (Cys76). Cys194 (proton donor) is an active-site residue. Residue 195–196 (VQ) participates in substrate binding.

This sequence belongs to the maleate isomerase family. Homodimer.

The enzyme catalyses maleate = fumarate. In terms of biological role, catalyzes cis-trans isomerization of the C2-C3 double bond in maleate to yield fumarate. Shows a strict specificity for maleate, with no activity detected toward structurally related substrates including citraconate, mesaconate, dimethylmaleate, and maleamide. The chain is Maleate isomerase from Nocardia farcinica (strain IFM 10152).